Reading from the N-terminus, the 166-residue chain is Large ribosomal subunit protein uL10 (166 aa).

Belongs to the universal ribosomal protein uL10 family. Part of the ribosomal stalk of the 50S ribosomal subunit. The N-terminus interacts with L11 and the large rRNA to form the base of the stalk. The C-terminus forms an elongated spine to which L12 dimers bind in a sequential fashion forming a multimeric L10(L12)X complex.

Functionally, forms part of the ribosomal stalk, playing a central role in the interaction of the ribosome with GTP-bound translation factors. The sequence is that of Large ribosomal subunit protein uL10 from Shewanella amazonensis (strain ATCC BAA-1098 / SB2B).